Here is a 130-residue protein sequence, read N- to C-terminus: MKVGVGIHIIADFYGVDSKLISTTERMYPIIEGAVKYGRLTKISSDYYQFRPQGASGVVLLAESHLSFHTWPEYGLVTLDIYTCGDPKTADDAFEYLTRELKPTSVTTRKIVRGDLVGEEGLNEMQVEIH.

Residue serine 64 is the Schiff-base intermediate with substrate; via pyruvic acid of the active site. Residue serine 64 is modified to Pyruvic acid (Ser); by autocatalysis. Histidine 69 (proton acceptor; for processing activity) is an active-site residue. Cysteine 84 serves as the catalytic Proton donor; for catalytic activity.

This sequence belongs to the prokaryotic AdoMetDC family. Type 1 subfamily. In terms of assembly, heterotetramer of two alpha and two beta chains arranged as a dimer of alpha/beta heterodimers. Pyruvate serves as cofactor. Post-translationally, is synthesized initially as an inactive proenzyme. Formation of the active enzyme involves a self-maturation process in which the active site pyruvoyl group is generated from an internal serine residue via an autocatalytic post-translational modification. Two non-identical subunits are generated from the proenzyme in this reaction, and the pyruvate is formed at the N-terminus of the alpha chain, which is derived from the carboxyl end of the proenzyme. The post-translation cleavage follows an unusual pathway, termed non-hydrolytic serinolysis, in which the side chain hydroxyl group of the serine supplies its oxygen atom to form the C-terminus of the beta chain, while the remainder of the serine residue undergoes an oxidative deamination to produce ammonia and the pyruvoyl group blocking the N-terminus of the alpha chain.

The catalysed reaction is S-adenosyl-L-methionine + H(+) = S-adenosyl 3-(methylsulfanyl)propylamine + CO2. The protein operates within amine and polyamine biosynthesis; S-adenosylmethioninamine biosynthesis; S-adenosylmethioninamine from S-adenosyl-L-methionine: step 1/1. Its function is as follows. Catalyzes the decarboxylation of S-adenosylmethionine to S-adenosylmethioninamine (dcAdoMet), the propylamine donor required for the synthesis of the polyamines spermine and spermidine from the diamine putrescine. The protein is S-adenosylmethionine decarboxylase proenzyme of Thermoplasma volcanium (strain ATCC 51530 / DSM 4299 / JCM 9571 / NBRC 15438 / GSS1).